Consider the following 413-residue polypeptide: Protein CDKN2AIP homolog B (413 aa).

The XRN2-binding (XTBD) domain maps to 21–118; the sequence is LERVRGQCES…TTRDELVAKV (98 aa). Positions 118-266 are disordered; that stretch reads VKKRGNSSSN…PTRRFTTEHT (149 aa). Over residues 183–193 the composition is skewed to basic and acidic residues; that stretch reads NKREAHSRTDV.

This sequence belongs to the CARF family.

It localises to the nucleus. It is found in the nucleoplasm. In terms of biological role, may regulate DNA damage response and cell proliferation. This is Protein CDKN2AIP homolog B (cdkn2aip-b) from Xenopus laevis (African clawed frog).